The following is a 484-amino-acid chain: Replication factor C large subunit (484 aa).

46–53 (GPPGSGKT) provides a ligand contact to ATP. Composition is skewed to basic and acidic residues over residues 419–432 (VKTE…KTKE), 442–451 (RISEPPEPLK), and 459–478 (KSVE…KKQA). Residues 419–484 (VKTETPKKKE…KKQATLDSFF (66 aa)) are disordered.

This sequence belongs to the activator 1 small subunits family. RfcL subfamily. In terms of assembly, heteromultimer composed of small subunits (RfcS) and large subunits (RfcL).

Its function is as follows. Part of the RFC clamp loader complex which loads the PCNA sliding clamp onto DNA. The polypeptide is Replication factor C large subunit (Methanococcus maripaludis (strain C5 / ATCC BAA-1333)).